A 137-amino-acid chain; its full sequence is Small ribosomal subunit protein uS12 (137 aa).

Disordered regions lie at residues 1-22 and 37-57; these read MPTI…SKSP and KNPS…TPKK. Residues 9–19 show a composition bias toward basic residues; sequence RKGRKSHKGKS. Asp-102 carries the post-translational modification 3-methylthioaspartic acid.

The protein belongs to the universal ribosomal protein uS12 family. As to quaternary structure, part of the 30S ribosomal subunit. Contacts proteins S8 and S17. May interact with IF1 in the 30S initiation complex.

With S4 and S5 plays an important role in translational accuracy. In terms of biological role, interacts with and stabilizes bases of the 16S rRNA that are involved in tRNA selection in the A site and with the mRNA backbone. Located at the interface of the 30S and 50S subunits, it traverses the body of the 30S subunit contacting proteins on the other side and probably holding the rRNA structure together. The combined cluster of proteins S8, S12 and S17 appears to hold together the shoulder and platform of the 30S subunit. In Limosilactobacillus fermentum (strain NBRC 3956 / LMG 18251) (Lactobacillus fermentum), this protein is Small ribosomal subunit protein uS12.